We begin with the raw amino-acid sequence, 67 residues long: Large ribosomal subunit protein bL35 (67 aa).

This sequence belongs to the bacterial ribosomal protein bL35 family.

This chain is Large ribosomal subunit protein bL35, found in Acidiphilium cryptum (strain JF-5).